Reading from the N-terminus, the 220-residue chain is 1-Cys peroxiredoxin A (220 aa).

In terms of domain architecture, Thioredoxin spans 4 to 165 (LTIGDTVPNL…VVRAVDALQT (162 aa)). C46 functions as the Cysteine sulfenic acid (-SOH) intermediate in the catalytic mechanism. The Bipartite nuclear localization signal motif lies at 195–218 (KEKFPQGFDTADLPSGKGYLRFTK).

This sequence belongs to the peroxiredoxin family. Prx6 subfamily.

The protein resides in the nucleus. It localises to the cytoplasm. The enzyme catalyses a hydroperoxide + [thioredoxin]-dithiol = an alcohol + [thioredoxin]-disulfide + H2O. Functionally, thiol-specific peroxidase that catalyzes the reduction of hydrogen peroxide and organic hydroperoxides to water and alcohols, respectively. Seems to contribute to the inhibition of germination during stress. This chain is 1-Cys peroxiredoxin A, found in Oryza sativa subsp. japonica (Rice).